The chain runs to 310 residues: Tyrosine recombinase XerC (310 aa).

The region spanning 1–92 (MDELIKEFDR…SLRAFFKYLH (92 aa)) is the Core-binding (CB) domain. The Tyr recombinase domain maps to 113–300 (YIPAVLSVDE…SVNRLMAVYD (188 aa)). Active-site residues include Arg-153, Lys-177, His-252, Arg-255, and His-278. The O-(3'-phospho-DNA)-tyrosine intermediate role is filled by Tyr-287.

This sequence belongs to the 'phage' integrase family. XerC subfamily. In terms of assembly, forms a cyclic heterotetrameric complex composed of two molecules of XerC and two molecules of XerD.

The protein localises to the cytoplasm. Functionally, site-specific tyrosine recombinase, which acts by catalyzing the cutting and rejoining of the recombining DNA molecules. The XerC-XerD complex is essential to convert dimers of the bacterial chromosome into monomers to permit their segregation at cell division. It also contributes to the segregational stability of plasmids. The polypeptide is Tyrosine recombinase XerC (Syntrophus aciditrophicus (strain SB)).